Here is a 355-residue protein sequence, read N- to C-terminus: Phospho-N-acetylmuramoyl-pentapeptide-transferase (355 aa).

Transmembrane regions (helical) follow at residues 3 to 23, 56 to 76, 80 to 100, 120 to 140, 156 to 176, 185 to 205, 224 to 244, 251 to 271, 276 to 296, and 330 to 350; these read GVLI…PWVI, VIIV…GIGF, GLLV…DDYI, AAVA…AGLL, VGII…SNAV, LAAG…FWQF, PLDV…FLWW, IFMG…IAIV, LLLV…MIQV, and FWIV…AEFL.

This sequence belongs to the glycosyltransferase 4 family. MraY subfamily. Requires Mg(2+) as cofactor.

Its subcellular location is the cell membrane. The catalysed reaction is UDP-N-acetyl-alpha-D-muramoyl-L-alanyl-gamma-D-glutamyl-meso-2,6-diaminopimeloyl-D-alanyl-D-alanine + di-trans,octa-cis-undecaprenyl phosphate = di-trans,octa-cis-undecaprenyl diphospho-N-acetyl-alpha-D-muramoyl-L-alanyl-D-glutamyl-meso-2,6-diaminopimeloyl-D-alanyl-D-alanine + UMP. It participates in cell wall biogenesis; peptidoglycan biosynthesis. Functionally, catalyzes the initial step of the lipid cycle reactions in the biosynthesis of the cell wall peptidoglycan: transfers peptidoglycan precursor phospho-MurNAc-pentapeptide from UDP-MurNAc-pentapeptide onto the lipid carrier undecaprenyl phosphate, yielding undecaprenyl-pyrophosphoryl-MurNAc-pentapeptide, known as lipid I. The protein is Phospho-N-acetylmuramoyl-pentapeptide-transferase of Frankia casuarinae (strain DSM 45818 / CECT 9043 / HFP020203 / CcI3).